Here is a 341-residue protein sequence, read N- to C-terminus: tRNA N6-adenosine threonylcarbamoyltransferase (341 aa).

Fe cation-binding residues include histidine 111 and histidine 115. Substrate contacts are provided by residues 134–138 (LVSGG), aspartate 167, glycine 180, and asparagine 277. A Fe cation-binding site is contributed by aspartate 305.

It belongs to the KAE1 / TsaD family. Fe(2+) is required as a cofactor.

It localises to the cytoplasm. The catalysed reaction is L-threonylcarbamoyladenylate + adenosine(37) in tRNA = N(6)-L-threonylcarbamoyladenosine(37) in tRNA + AMP + H(+). In terms of biological role, required for the formation of a threonylcarbamoyl group on adenosine at position 37 (t(6)A37) in tRNAs that read codons beginning with adenine. Is involved in the transfer of the threonylcarbamoyl moiety of threonylcarbamoyl-AMP (TC-AMP) to the N6 group of A37, together with TsaE and TsaB. TsaD likely plays a direct catalytic role in this reaction. This Chromobacterium violaceum (strain ATCC 12472 / DSM 30191 / JCM 1249 / CCUG 213 / NBRC 12614 / NCIMB 9131 / NCTC 9757 / MK) protein is tRNA N6-adenosine threonylcarbamoyltransferase.